Reading from the N-terminus, the 244-residue chain is RNA transcription, translation and transport factor protein (244 aa).

N6-acetyllysine occurs at positions 20, 62, and 98.

It belongs to the RTRAF family. As to quaternary structure, homodimer. Interacts with FAM98A (via N- and C-terminus). Interacts with NIN; which may prevent phosphorylation of NIN. Interacts with POLR2A. Component of a tRNA-splicing ligase complex with FAM98B, DDX1 and RTCB. (Microbial infection) Interacts with influenza A virus (IAV) RNA polymerase subunits PA, PB1 and PB2, and nucleocapsid NP. Associates with IAV polymerase complexes both in the nucleus and cytosol. Associates with IAV ribonucleoproteins (vRNP) packaged in virions. Interacts with hepatitis C virus core protein p19. In terms of tissue distribution, widely expressed. Expressed at high level in heart and skeletal muscle. Expressed at intermediate level in liver, pancreas, fetal brain and fetal lung. Weakly expressed in adult brain, adult lung, placenta, fetal liver and fetal kidney. Overexpressed in many brain tumors.

The protein localises to the nucleus. It localises to the cytoplasm. The protein resides in the cytosol. Its subcellular location is the perinuclear region. It is found in the cytoskeleton. The protein localises to the microtubule organizing center. It localises to the centrosome. RNA-binding protein involved in modulation of mRNA transcription by Polymerase II. Component of the tRNA-splicing ligase complex and is required for tRNA ligation. May be required for RNA transport. Its function is as follows. (Microbial infection) In case of infection by influenza virus A (IVA), is involved in viral replication. The polypeptide is RNA transcription, translation and transport factor protein (Homo sapiens (Human)).